The chain runs to 433 residues: Zinc finger and SCAN domain-containing protein 4 (433 aa).

The SCAN box domain occupies 44–126 (RMVLNSFQDS…RFIEDLTDDS (83 aa)). 3 stretches are compositionally biased toward polar residues: residues 165-185 (TTRE…SLET), 195-210 (GWNS…ENIT), and 277-299 (QPEQ…STCE). Disordered stretches follow at residues 165–210 (TTRE…ENIT) and 275–301 (ISQP…CEVH). 4 C2H2-type zinc fingers span residues 312 to 334 (YKCE…QRRH), 340 to 362 (FVCP…QIIH), 368 to 390 (FTCS…ERIH), and 396 to 418 (YTCP…MRTH).

It is found in the nucleus. It localises to the chromosome. The protein localises to the telomere. Its function is as follows. Embryonic stem (ES) cell-specific transcription factor required to regulate ES cell pluripotency. Binds telomeres and plays a key role in genomic stability in ES cells by regulating telomere elongation. Acts as an activator of spontaneous telomere sister chromatid exchange (T-SCE) and telomere elongation in undifferentiated ES cells. This is Zinc finger and SCAN domain-containing protein 4 (ZSCAN4) from Homo sapiens (Human).